A 263-amino-acid polypeptide reads, in one-letter code: MNDNFKKQPHHLIYEELLQQGITLGITTRGDGLSDYPKNAFNMARYIDDRPYNITQHQLQLAEEIAFDRKNWVFPIQTHENKVACITKDDIGTNIDTLTDALHGIDAMYTYDSNVLLTMCYADCVPVYFYSTKHHFIALAHAGWRGTYTEIVKEVLKHVNFDLKDLHVVIGPSTSSSYEINDDIKNKFETLPIDSANYIETRGRDRHGIDLKKANAELLNYYGVPKENIYTTAYATSEHLELFFSYRLEKGQTGRMLAFIGQQ.

Zn(2+) is bound by residues His-79, Cys-124, and His-141.

This sequence belongs to the purine nucleoside phosphorylase YfiH/LACC1 family. Homodimer. Requires Cu(2+) as cofactor. Zn(2+) serves as cofactor.

It carries out the reaction adenosine + phosphate = alpha-D-ribose 1-phosphate + adenine. It catalyses the reaction S-methyl-5'-thioadenosine + phosphate = 5-(methylsulfanyl)-alpha-D-ribose 1-phosphate + adenine. The catalysed reaction is inosine + phosphate = alpha-D-ribose 1-phosphate + hypoxanthine. The enzyme catalyses adenosine + H2O + H(+) = inosine + NH4(+). Purine nucleoside enzyme that catalyzes the phosphorolysis of adenosine and inosine nucleosides, yielding D-ribose 1-phosphate and the respective free bases, adenine and hypoxanthine. Also catalyzes the phosphorolysis of S-methyl-5'-thioadenosine into adenine and S-methyl-5-thio-alpha-D-ribose 1-phosphate. Also has adenosine deaminase activity. In Staphylococcus aureus (strain Mu50 / ATCC 700699), this protein is Purine nucleoside phosphorylase SAV1187.